Consider the following 303-residue polypeptide: Eukaryotic translation initiation factor 3 subunit G (303 aa).

Residues 1-38 (MATQTKHDWADDEDLEETTTTTAPTTDLPPPQKIQNKD) form a disordered region. The region spanning 223-301 (ATLRVTNVSE…LILRVEFAKK (79 aa)) is the RRM domain.

The protein belongs to the eIF-3 subunit G family. As to quaternary structure, component of the eukaryotic translation initiation factor 3 (eIF-3) complex.

It localises to the cytoplasm. RNA-binding component of the eukaryotic translation initiation factor 3 (eIF-3) complex, which is involved in protein synthesis of a specialized repertoire of mRNAs and, together with other initiation factors, stimulates binding of mRNA and methionyl-tRNAi to the 40S ribosome. The eIF-3 complex specifically targets and initiates translation of a subset of mRNAs involved in cell proliferation. This subunit can bind 18S rRNA. The chain is Eukaryotic translation initiation factor 3 subunit G from Chaetomium globosum (strain ATCC 6205 / CBS 148.51 / DSM 1962 / NBRC 6347 / NRRL 1970) (Soil fungus).